Here is a 785-residue protein sequence, read N- to C-terminus: 1-phosphatidylinositol 4,5-bisphosphate phosphodiesterase delta-3 (785 aa).

The interval 1–43 (MLCGGWKRSRRSPEESRVSAQVAAPLAFPPSPASSDSSTKRPG) is disordered. Residues 65–168 (SRLLKIRSRT…WVRGLAKLRA (104 aa)) form the PH domain. The substrate binding stretch occupies residues 69–97 (KIRSRTWHKERLYRLQEDGLSVWFQRRIP). Residue Ser-101 is modified to Phosphoserine. EF-hand domains lie at 178 to 213 (RLDHWIHSYLHRADSDQDSKMSFKEIKSLLRMVNVD), 214 to 249 (MNDMYAYRLFKECDHSNNERLEGAEIEAFLRRLLKR), and 246 to 281 (LLKRPELEEIFRRYSGEDRVLSASELLEFLEDQGED). The Ca(2+) site is built by Asp-191, Asp-193, Asp-195, Lys-197, Glu-202, Asp-227, Ser-229, Asn-231, Arg-233, and Glu-238. The region spanning 333 to 478 (QDMGQPLAHY…LKGRILVKGK (146 aa)) is the PI-PLC X-box domain. The active site involves His-348. Ca(2+) contacts are provided by Asn-349, Glu-378, and Asp-380. His-393 is an active-site residue. Glu-427 serves as a coordination point for Ca(2+). Residues Lys-476 and Lys-478 each contribute to the substrate site. The span at 484 to 493 (RSEDGRILSD) shows a compositional bias: basic and acidic residues. Residues 484–517 (RSEDGRILSDREEEEEEEEEAEEALEAAEQRSRA) form a disordered region. Ser-492 carries the phosphoserine modification. Positions 494–509 (REEEEEEEEEAEEALE) are enriched in acidic residues. A PI-PLC Y-box domain is found at 524-640 (LSALAVYCCA…GYVLKPAYLR (117 aa)). Residue Ser-553 coordinates substrate. The residue at position 569 (Ser-569) is a Phosphoserine. Position 580 (Arg-580) interacts with substrate. The C2 domain maps to 636–765 (PAYLRQLNTT…QGYRHIHLLS (130 aa)). Ca(2+) is bound by residues Ile-679, Asp-681, Asn-705, Asp-734, Tyr-735, and Asp-736.

The cofactor is Ca(2+). Expressed in cerebellum and cerebral cortex.

The protein localises to the membrane. It localises to the cytoplasm. The protein resides in the cleavage furrow. The catalysed reaction is a 1,2-diacyl-sn-glycero-3-phospho-(1D-myo-inositol-4,5-bisphosphate) + H2O = 1D-myo-inositol 1,4,5-trisphosphate + a 1,2-diacyl-sn-glycerol + H(+). Its activity is regulated as follows. Strongly activated by phosphatidic acid. Inhibited by phosphatidylethanolamine (PtdEtn), phosphatidylcholine (PtdCho), sphingomyelin and phosphatidylserine (PtdSer). Hydrolyzes the phosphatidylinositol 4,5-bisphosphate (PIP2) to generate 2 second messenger molecules diacylglycerol (DAG) and inositol 1,4,5-trisphosphate (IP3). DAG mediates the activation of protein kinase C (PKC), while IP3 releases Ca(2+) from intracellular stores. Essential for trophoblast and placental development. May participate in cytokinesis by hydrolyzing PIP2 at the cleavage furrow. Regulates neurite outgrowth through the inhibition of RhoA/Rho kinase signaling. The polypeptide is 1-phosphatidylinositol 4,5-bisphosphate phosphodiesterase delta-3 (Mus musculus (Mouse)).